Here is a 738-residue protein sequence, read N- to C-terminus: Catalase-peroxidase (738 aa).

A compositionally biased stretch (basic and acidic residues) spans 1–16; that stretch reads MSENHDAIVTDAKTEE. The disordered stretch occupies residues 1-37; it reads MSENHDAIVTDAKTEEAGGCPVAHGRAPHPTQGGGNR. A cross-link (tryptophyl-tyrosyl-methioninium (Trp-Tyr) (with M-257)) is located at residues 108-231; sequence WHSAGTYRIS…LGAVQMGLIY (124 aa). The active-site Proton acceptor is the histidine 109. Residues 231–257 constitute a cross-link (tryptophyl-tyrosyl-methioninium (Tyr-Met) (with W-108)); sequence YVNPEGPNGNPDPIAAARDIRETFGRM. Heme b is bound at residue histidine 272.

Belongs to the peroxidase family. Peroxidase/catalase subfamily. As to quaternary structure, homodimer or homotetramer. Requires heme b as cofactor. In terms of processing, formation of the three residue Trp-Tyr-Met cross-link is important for the catalase, but not the peroxidase activity of the enzyme.

It catalyses the reaction H2O2 + AH2 = A + 2 H2O. The enzyme catalyses 2 H2O2 = O2 + 2 H2O. Its function is as follows. Bifunctional enzyme with both catalase and broad-spectrum peroxidase activity. This Streptomyces ambofaciens protein is Catalase-peroxidase.